Here is an 804-residue protein sequence, read N- to C-terminus: Exo-1,4-beta-xylosidase xlnD (804 aa).

An N-terminal signal peptide occupies residues 1–26 (MAHSMSRPVAATAAALLALALPQALA). N29, N124, N148, N242, and N251 each carry an N-linked (GlcNAc...) asparagine glycan. Residue D315 is part of the active site. N357, N390, N413, N444, N455, N573, N665, N696, and N718 each carry an N-linked (GlcNAc...) asparagine glycan.

This sequence belongs to the glycosyl hydrolase 3 family.

The protein resides in the secreted. It carries out the reaction Hydrolysis of (1-&gt;4)-beta-D-xylans, to remove successive D-xylose residues from the non-reducing termini.. Its pathway is glycan degradation; xylan degradation. Its function is as follows. Xylan 1,4-beta-xylosidase involved in the hydrolysis of xylan, a major structural heterogeneous polysaccharide found in plant biomass representing the second most abundant polysaccharide in the biosphere, after cellulose. In Aspergillus awamori (Black koji mold), this protein is Exo-1,4-beta-xylosidase xlnD (xlnD).